Reading from the N-terminus, the 218-residue chain is Probable GTP-binding protein EngB (218 aa).

An EngB-type G domain is found at 44–218 (DRIEVCFAGR…LRATIATIET (175 aa)). Residues 52–59 (GRSNVGKS), 79–83 (GRTQE), 97–100 (DLPG), 164–167 (TKSD), and 198–200 (TSS) contribute to the GTP site. The Mg(2+) site is built by Ser-59 and Thr-81.

Belongs to the TRAFAC class TrmE-Era-EngA-EngB-Septin-like GTPase superfamily. EngB GTPase family. It depends on Mg(2+) as a cofactor.

Its function is as follows. Necessary for normal cell division and for the maintenance of normal septation. This Jannaschia sp. (strain CCS1) protein is Probable GTP-binding protein EngB.